The following is a 61-amino-acid chain: Sec-independent protein translocase protein TatA (61 aa).

A helical membrane pass occupies residues glycine 2–phenylalanine 22.

It belongs to the TatA/E family. The Tat system comprises two distinct complexes: a TatABC complex, containing multiple copies of TatA, TatB and TatC subunits, and a separate TatA complex, containing only TatA subunits. Substrates initially bind to the TatABC complex, which probably triggers association of the separate TatA complex to form the active translocon.

The protein localises to the cell inner membrane. In terms of biological role, part of the twin-arginine translocation (Tat) system that transports large folded proteins containing a characteristic twin-arginine motif in their signal peptide across membranes. TatA could form the protein-conducting channel of the Tat system. This chain is Sec-independent protein translocase protein TatA, found in Legionella pneumophila (strain Paris).